The sequence spans 459 residues: uncharacterized protein (459 aa).

The region spanning 5–63 (PVEEGQKFPLTIRRMGINGEGIGYFKKAVVFVPGAITGEEVVVEAVKVRDRFTEAKLNK) is the TRAM domain. [4Fe-4S] cluster is bound by residues cysteine 76, cysteine 82, cysteine 85, and cysteine 166. Residues glutamine 290, tyrosine 319, aspartate 340, and aspartate 388 each coordinate S-adenosyl-L-methionine. Cysteine 415 (nucleophile) is an active-site residue.

Belongs to the class I-like SAM-binding methyltransferase superfamily. RNA M5U methyltransferase family.

This is an uncharacterized protein from Listeria monocytogenes serovar 1/2a (strain ATCC BAA-679 / EGD-e).